The chain runs to 28 residues: M-poneritoxin-Da4b (28 aa).

At Ala28 the chain carries Alanine amide.

Expressed by the venom gland.

It is found in the secreted. The synthetic peptide has antimicrobial activity against the Gram-positive bacteria B.amyloliquefacies S499 (MIC=0.05 mM), L.monocytogenes 2231 and S.aureus ATCC 29213, against the Gram-negative bacteria P.putida BTP1, P.aeruginosa PaO1 and E.coli ATCC 10536, and against the fungi S.cerevisiae, R.mucilaginosa and C.cucumerinum. It is not active against the fungi F.oxysporum and B.cinerea. In Dinoponera australis (Giant neotropical hunting ant), this protein is M-poneritoxin-Da4b.